We begin with the raw amino-acid sequence, 448 residues long: uncharacterized protein (448 aa).

The next 12 helical transmembrane spans lie at 14–34 (PFII…YGII), 59–79 (TLLA…GFLA), 87–107 (VPML…TFGN), 120–140 (GLSA…VVGA), 148–168 (GGIF…GGIV), 171–191 (SLGY…DIAL), 250–270 (IFGP…FDAT), 288–308 (LMFG…GAMV), 316–333 (IGKR…LLCI), 338–358 (TSLN…VLAF), 392–412 (FSAY…VAGF), and 417–437 (FNFI…SLMA).

Belongs to the major facilitator superfamily. TCR/Tet family.

Its subcellular location is the endoplasmic reticulum. The protein resides in the membrane. This is an uncharacterized protein from Schizosaccharomyces pombe (strain 972 / ATCC 24843) (Fission yeast).